A 250-amino-acid polypeptide reads, in one-letter code: Ribosomal RNA small subunit methyltransferase J (250 aa).

Residues 102–103, 118–119, 154–155, and D172 each bind S-adenosyl-L-methionine; these read RD, ER, and SS.

The protein belongs to the methyltransferase superfamily. RsmJ family.

It is found in the cytoplasm. The enzyme catalyses guanosine(1516) in 16S rRNA + S-adenosyl-L-methionine = N(2)-methylguanosine(1516) in 16S rRNA + S-adenosyl-L-homocysteine + H(+). Its function is as follows. Specifically methylates the guanosine in position 1516 of 16S rRNA. This chain is Ribosomal RNA small subunit methyltransferase J, found in Edwardsiella ictaluri (strain 93-146).